The chain runs to 330 residues: Aspartate--ammonia ligase (330 aa).

This sequence belongs to the class-II aminoacyl-tRNA synthetase family. AsnA subfamily.

It is found in the cytoplasm. It catalyses the reaction L-aspartate + NH4(+) + ATP = L-asparagine + AMP + diphosphate + H(+). The protein operates within amino-acid biosynthesis; L-asparagine biosynthesis; L-asparagine from L-aspartate (ammonia route): step 1/1. In Streptococcus agalactiae serotype Ia (strain ATCC 27591 / A909 / CDC SS700), this protein is Aspartate--ammonia ligase.